The primary structure comprises 552 residues: Membrane protein insertase YidC (552 aa).

The helical transmembrane segment at 3–23 (TKRLILFVIFSFSILMLWDSW) threads the bilayer. Residues 29 to 65 (PPAASQTQTTAQSVEDGSVPQAAKSSASAANQASVPA) are disordered. 4 helical membrane passes run 359–379 (WGVA…PLSA), 429–449 (LPIL…LGSV), 463–483 (LSAV…MIIQ), and 503–523 (PIVF…YWLV).

The protein belongs to the OXA1/ALB3/YidC family. Type 1 subfamily. As to quaternary structure, interacts with the Sec translocase complex via SecD. Specifically interacts with transmembrane segments of nascent integral membrane proteins during membrane integration.

It localises to the cell inner membrane. Its function is as follows. Required for the insertion and/or proper folding and/or complex formation of integral membrane proteins into the membrane. Involved in integration of membrane proteins that insert both dependently and independently of the Sec translocase complex, as well as at least some lipoproteins. Aids folding of multispanning membrane proteins. This Methylobacillus flagellatus (strain ATCC 51484 / DSM 6875 / VKM B-1610 / KT) protein is Membrane protein insertase YidC.